The primary structure comprises 227 residues: Cytidylate kinase (227 aa).

12–20 is an ATP binding site; sequence GPSGAGKGT.

It belongs to the cytidylate kinase family. Type 1 subfamily.

It is found in the cytoplasm. It carries out the reaction CMP + ATP = CDP + ADP. It catalyses the reaction dCMP + ATP = dCDP + ADP. This Salmonella typhimurium (strain LT2 / SGSC1412 / ATCC 700720) protein is Cytidylate kinase.